The following is a 393-amino-acid chain: MLTIGTALRPGATRVMLLGAGELGKEVAIECQRLGLEVIAVDRYADAPAMHVAHRSHVINMLDGAALKQLVAQEKPHYIVPEIEAIATDMLVELEKMGQHVVPCAEATRLTMNREGIRRLAAETLQLPTSSYRFADTDSAFFQAVRDIGYPCIVKPVMSSSGKGQSLIRSEEHLQAAWEYAQQGGRAGSGRVIIEGLVHFDFEITLLTIRAVDGIHFCAPIGHRQEDGDYRESWQPQAMSDIALQRAKEISAQVVTALGGFGLFGVELFVCGDDVIFSEVSPRPHDTGMVTLISQNMSEFALHVRAFLGLPIGTIRQYGAAASAVILPELTSQNITYRGLETALIGDTQIRLFGKPEIAGQRRLGVALAVADNIETAIEVAKKAAGNIEVSGE.

N(1)-(5-phospho-beta-D-ribosyl)glycinamide is bound by residues 22 to 23 and glutamate 82; that span reads EL. ATP is bound by residues arginine 114, lysine 155, 160-165, 195-198, and glutamate 203; these read SSGKGQ and EGLV. The region spanning 119–308 is the ATP-grasp domain; it reads RLAAETLQLP…EFALHVRAFL (190 aa). Mg(2+) contacts are provided by glutamate 267 and glutamate 279. N(1)-(5-phospho-beta-D-ribosyl)glycinamide-binding positions include aspartate 286, lysine 355, and 362–363; that span reads RR.

This sequence belongs to the PurK/PurT family. In terms of assembly, homodimer.

It carries out the reaction N(1)-(5-phospho-beta-D-ribosyl)glycinamide + formate + ATP = N(2)-formyl-N(1)-(5-phospho-beta-D-ribosyl)glycinamide + ADP + phosphate + H(+). It participates in purine metabolism; IMP biosynthesis via de novo pathway; N(2)-formyl-N(1)-(5-phospho-D-ribosyl)glycinamide from N(1)-(5-phospho-D-ribosyl)glycinamide (formate route): step 1/1. Its function is as follows. Involved in the de novo purine biosynthesis. Catalyzes the transfer of formate to 5-phospho-ribosyl-glycinamide (GAR), producing 5-phospho-ribosyl-N-formylglycinamide (FGAR). Formate is provided by PurU via hydrolysis of 10-formyl-tetrahydrofolate. This is Formate-dependent phosphoribosylglycinamide formyltransferase from Yersinia pseudotuberculosis serotype IB (strain PB1/+).